Consider the following 152-residue polypeptide: Psoriasis susceptibility 1 candidate gene 1 protein homolog (152 aa).

Over residues methionine 1–proline 31 the composition is skewed to polar residues. Disordered stretches follow at residues methionine 1 to proline 39 and alanine 132 to isoleucine 152.

This is Psoriasis susceptibility 1 candidate gene 1 protein homolog (PSORS1C1) from Pan troglodytes (Chimpanzee).